The following is a 324-amino-acid chain: MTWKGSGQETVGAEPTLWAISDLHTGHLGNKPVAESLYPSSPDDWLIVAGDVAERTDEIRWSLDLLRRRFAKVIWVPGNHELWTTNRDPMQIFGRARYDYLVNMCDEMGVVTPEHPFPVWTERGGPATIVPMFLLYDYSFLPEGANSKAEGVAIAKERNVVATDEFLLSPEPYPTRDAWCHERVAATRARLEQLDWMQPTVLVNHFPLLRQPCDALFYPEFSLWCGTTKTADWHTRYNAVCSVYGHLHIPRTTWYDGVRFEEVSVGYPREWRRRKPYSWLRQVLPDPQYAPGYLNDFGGHFVITPEMRTQAAQFRERLRQRQSR.

Mn(2+) contacts are provided by Asp22, His24, and Asp51. Positions 51, 79, 205, and 246 each coordinate Fe cation. His248 lines the Mn(2+) pocket.

The protein belongs to the metallophosphoesterase superfamily. The cofactor is Fe(3+). Requires Mn(2+) as cofactor.

It catalyses the reaction holo-[ACP] + H2O = apo-[ACP] + (R)-4'-phosphopantetheine + H(+). In terms of biological role, catalyzes the hydrolysis of the phosphopantetheine group from substrate holo-carrier proteins. The chain is [Acyl-carrier-protein] phosphodiesterase PptH from Mycobacterium tuberculosis (strain ATCC 25618 / H37Rv).